Consider the following 234-residue polypeptide: Carboxy-S-adenosyl-L-methionine synthase (234 aa).

S-adenosyl-L-methionine-binding positions include Tyr35, 60–62 (GCS), 83–84 (DN), 109–110 (DI), Asn124, and Arg191.

Belongs to the class I-like SAM-binding methyltransferase superfamily. Cx-SAM synthase family. Homodimer.

It catalyses the reaction prephenate + S-adenosyl-L-methionine = carboxy-S-adenosyl-L-methionine + 3-phenylpyruvate + H2O. In terms of biological role, catalyzes the conversion of S-adenosyl-L-methionine (SAM) to carboxy-S-adenosyl-L-methionine (Cx-SAM). The polypeptide is Carboxy-S-adenosyl-L-methionine synthase (Campylobacter hominis (strain ATCC BAA-381 / DSM 21671 / CCUG 45161 / LMG 19568 / NCTC 13146 / CH001A)).